The primary structure comprises 785 residues: Altered inheritance of mitochondria protein 3-2 (785 aa).

Disordered regions lie at residues 33-122 (TGYQ…QPYM), 142-406 (QQVA…SENL), and 418-785 (NVDV…RLHK). Residues 91 to 102 (GSSGNSANGSSA) are compositionally biased toward low complexity. Composition is skewed to polar residues over residues 103–122 (TIPT…QPYM) and 143–199 (QVAT…QLNI). The segment covering 249–260 (KPYDWEEQKTTK) has biased composition (basic and acidic residues). 5 stretches are compositionally biased toward polar residues: residues 283-310 (SRQG…TTTG), 350-366 (ATNN…QNTK), 375-388 (TNKS…SNVM), 395-405 (QMNTKANSSEN), and 455-465 (SSISRDNYNSI). Residues 478-497 (NTGEREGAQELKADIAERSQ) show a composition bias toward basic and acidic residues. A compositionally biased stretch (polar residues) spans 527–556 (AQTSSDIPQKSSLVTDESNISVPNKSQQPM). 2 stretches are compositionally biased toward basic and acidic residues: residues 587 to 613 (KSLE…EQLK) and 624 to 637 (KNMK…DNKN). Polar residues predominate over residues 659-671 (SLTSEGNHMNLNT). Composition is skewed to basic and acidic residues over residues 672–686 (EKGK…DESK) and 700–710 (FKREELSKEVV).

This sequence belongs to the AIM3 family.

The protein resides in the membrane raft. In Candida glabrata (strain ATCC 2001 / BCRC 20586 / JCM 3761 / NBRC 0622 / NRRL Y-65 / CBS 138) (Yeast), this protein is Altered inheritance of mitochondria protein 3-2 (AIM3-2).